Consider the following 1059-residue polypeptide: Tyrosine-protein kinase-like otk (1059 aa).

The signal sequence occupies residues 1–23; the sequence is MDMLMMWSICLFVCIFMAPFSCG. Over 24–597 the chain is Extracellular; sequence SGSSSRFIQV…GDGGFLATRA (574 aa). Ig-like C2-type domains follow at residues 28 to 112, 113 to 202, 258 to 377, 380 to 475, and 480 to 570; these read SRFI…REAS, PTAK…RVMS, PEGL…LAIN, PGIL…VSIN, and PKFS…AVLT. An N-linked (GlcNAc...) asparagine glycan is attached at N42. 4 disulfide bridges follow: C49/C99, C141/C191, C283/C366, and C411/C459. N-linked (GlcNAc...) asparagine glycosylation is found at N348, N429, N441, N456, N469, N524, and N536. C502 and C554 form a disulfide bridge. A helical transmembrane segment spans residues 598-618; it reads VLITMTVALAYIVLVVGLMLW. Residues 619–1059 lie on the Cytoplasmic side of the membrane; it reads CRYRRQARKA…ALSKAMQNSE (441 aa). The segment at 639 to 695 is disordered; the sequence is GGEQAGGEGSTSGNPKASEQEPCLGKQQRNGRNGKSKSNGDPQKSDDTACSQQSRAS. Positions 665-693 are enriched in polar residues; it reads QQRNGRNGKSKSNGDPQKSDDTACSQQSR. S698 is modified (phosphoserine). A Protein kinase; inactive domain is found at 712-1055; the sequence is LSELIQIGRG…QLGAALSKAM (344 aa). The tract at residues 739–781 is disordered; it reads AQANDKDSDNDKQHSNSENGSGGSSGSTTLSTLNEKRRSKTSM. The span at 742-753 shows a compositional bias: basic and acidic residues; the sequence is NDKDSDNDKQHS.

Belongs to the protein kinase superfamily. Tyr protein kinase family. Insulin receptor subfamily. Interacts with plexA; component of a receptor complex that mediates the repulsive signaling in response to Semaphorin ligands.

Its subcellular location is the cell membrane. Functionally, acts as a calcium-dependent, homophilic cell adhesion molecule that regulates neural recognition during the development of the nervous system. Component of the repulsive Plexin signaling response to regulate motor axon guidance at the embryonic stage. Also component of a receptor complex that is required in the adult visual system to innervate the lamina layer; specific targeting of R1-R6 axons. The sequence is that of Tyrosine-protein kinase-like otk from Drosophila willistoni (Fruit fly).